A 346-amino-acid polypeptide reads, in one-letter code: Holliday junction branch migration complex subunit RuvB (346 aa).

The large ATPase domain (RuvB-L) stretch occupies residues 1-181; that stretch reads MSDRNPLIDA…FGIPTRLNFY (181 aa). ATP contacts are provided by residues L20, R21, G62, K65, T66, T67, 128 to 130, R171, Y181, and R218; that span reads EDF. T66 contacts Mg(2+). Positions 182–252 are small ATPAse domain (RuvB-S); the sequence is TVEELEYIVR…IADEALSRLE (71 aa). The tract at residues 255–346 is head domain (RuvB-H); it reads NRGLDQLDRR…SQYGLFMEDE (92 aa). Residues R291, R310, and R315 each contribute to the DNA site.

Belongs to the RuvB family. In terms of assembly, homohexamer. Forms an RuvA(8)-RuvB(12)-Holliday junction (HJ) complex. HJ DNA is sandwiched between 2 RuvA tetramers; dsDNA enters through RuvA and exits via RuvB. An RuvB hexamer assembles on each DNA strand where it exits the tetramer. Each RuvB hexamer is contacted by two RuvA subunits (via domain III) on 2 adjacent RuvB subunits; this complex drives branch migration. In the full resolvosome a probable DNA-RuvA(4)-RuvB(12)-RuvC(2) complex forms which resolves the HJ.

The protein localises to the cytoplasm. The catalysed reaction is ATP + H2O = ADP + phosphate + H(+). Functionally, the RuvA-RuvB-RuvC complex processes Holliday junction (HJ) DNA during genetic recombination and DNA repair, while the RuvA-RuvB complex plays an important role in the rescue of blocked DNA replication forks via replication fork reversal (RFR). RuvA specifically binds to HJ cruciform DNA, conferring on it an open structure. The RuvB hexamer acts as an ATP-dependent pump, pulling dsDNA into and through the RuvAB complex. RuvB forms 2 homohexamers on either side of HJ DNA bound by 1 or 2 RuvA tetramers; 4 subunits per hexamer contact DNA at a time. Coordinated motions by a converter formed by DNA-disengaged RuvB subunits stimulates ATP hydrolysis and nucleotide exchange. Immobilization of the converter enables RuvB to convert the ATP-contained energy into a lever motion, pulling 2 nucleotides of DNA out of the RuvA tetramer per ATP hydrolyzed, thus driving DNA branch migration. The RuvB motors rotate together with the DNA substrate, which together with the progressing nucleotide cycle form the mechanistic basis for DNA recombination by continuous HJ branch migration. Branch migration allows RuvC to scan DNA until it finds its consensus sequence, where it cleaves and resolves cruciform DNA. In Brucella anthropi (strain ATCC 49188 / DSM 6882 / CCUG 24695 / JCM 21032 / LMG 3331 / NBRC 15819 / NCTC 12168 / Alc 37) (Ochrobactrum anthropi), this protein is Holliday junction branch migration complex subunit RuvB.